A 297-amino-acid polypeptide reads, in one-letter code: GTP cyclohydrolase FolE2 (297 aa).

It belongs to the GTP cyclohydrolase IV family.

It carries out the reaction GTP + H2O = 7,8-dihydroneopterin 3'-triphosphate + formate + H(+). It participates in cofactor biosynthesis; 7,8-dihydroneopterin triphosphate biosynthesis; 7,8-dihydroneopterin triphosphate from GTP: step 1/1. In terms of biological role, converts GTP to 7,8-dihydroneopterin triphosphate. This Pseudomonas fluorescens (strain ATCC BAA-477 / NRRL B-23932 / Pf-5) protein is GTP cyclohydrolase FolE2.